A 572-amino-acid polypeptide reads, in one-letter code: Proline--tRNA ligase (572 aa).

The protein belongs to the class-II aminoacyl-tRNA synthetase family. ProS type 1 subfamily. In terms of assembly, homodimer.

Its subcellular location is the cytoplasm. The catalysed reaction is tRNA(Pro) + L-proline + ATP = L-prolyl-tRNA(Pro) + AMP + diphosphate. Functionally, catalyzes the attachment of proline to tRNA(Pro) in a two-step reaction: proline is first activated by ATP to form Pro-AMP and then transferred to the acceptor end of tRNA(Pro). As ProRS can inadvertently accommodate and process non-cognate amino acids such as alanine and cysteine, to avoid such errors it has two additional distinct editing activities against alanine. One activity is designated as 'pretransfer' editing and involves the tRNA(Pro)-independent hydrolysis of activated Ala-AMP. The other activity is designated 'posttransfer' editing and involves deacylation of mischarged Ala-tRNA(Pro). The misacylated Cys-tRNA(Pro) is not edited by ProRS. In Pectobacterium carotovorum subsp. carotovorum (strain PC1), this protein is Proline--tRNA ligase.